The primary structure comprises 692 residues: Elongation factor G (692 aa).

Residues 8 to 282 (ENTRNIGIMA…GVVDYLPSPV (275 aa)) form the tr-type G domain. GTP is bound by residues 17–24 (AHIDAGKT), 81–85 (DTPGH), and 135–138 (NKMD).

It belongs to the TRAFAC class translation factor GTPase superfamily. Classic translation factor GTPase family. EF-G/EF-2 subfamily.

It is found in the cytoplasm. Its function is as follows. Catalyzes the GTP-dependent ribosomal translocation step during translation elongation. During this step, the ribosome changes from the pre-translocational (PRE) to the post-translocational (POST) state as the newly formed A-site-bound peptidyl-tRNA and P-site-bound deacylated tRNA move to the P and E sites, respectively. Catalyzes the coordinated movement of the two tRNA molecules, the mRNA and conformational changes in the ribosome. The protein is Elongation factor G of Geobacillus sp. (strain WCH70).